The following is a 278-amino-acid chain: 4-deoxy-L-threo-5-hexosulose-uronate ketol-isomerase (278 aa).

Zn(2+) is bound by residues His-196, His-198, Glu-203, and His-245.

It belongs to the KduI family. Zn(2+) serves as cofactor.

It carries out the reaction 5-dehydro-4-deoxy-D-glucuronate = 3-deoxy-D-glycero-2,5-hexodiulosonate. The protein operates within glycan metabolism; pectin degradation; 2-dehydro-3-deoxy-D-gluconate from pectin: step 4/5. Catalyzes the isomerization of 5-dehydro-4-deoxy-D-glucuronate to 3-deoxy-D-glycero-2,5-hexodiulosonate. This is 4-deoxy-L-threo-5-hexosulose-uronate ketol-isomerase from Shigella flexneri serotype 5b (strain 8401).